A 92-amino-acid chain; its full sequence is DNA-binding protein HU (92 aa).

Belongs to the bacterial histone-like protein family. Homodimer.

In terms of biological role, histone-like DNA-binding protein which is capable of wrapping DNA to stabilize it, and thus to prevent its denaturation under extreme environmental conditions. This Buchnera aphidicola subsp. Acyrthosiphon pisum (strain APS) (Acyrthosiphon pisum symbiotic bacterium) protein is DNA-binding protein HU (hup).